The sequence spans 473 residues: Photosystem II CP43 reaction center protein (473 aa).

Residues M1–E14 constitute a propeptide that is removed on maturation. T15 is subject to N-acetylthreonine. Residue T15 is modified to Phosphothreonine. 5 helical membrane-spanning segments follow: residues L69–A93, L134–N155, K178–T200, K255–S275, and W291–A312. Position 367 (E367) interacts with [CaMn4O5] cluster. The helical transmembrane segment at R447–P471 threads the bilayer.

Belongs to the PsbB/PsbC family. PsbC subfamily. As to quaternary structure, PSII is composed of 1 copy each of membrane proteins PsbA, PsbB, PsbC, PsbD, PsbE, PsbF, PsbH, PsbI, PsbJ, PsbK, PsbL, PsbM, PsbT, PsbX, PsbY, PsbZ, Psb30/Ycf12, at least 3 peripheral proteins of the oxygen-evolving complex and a large number of cofactors. It forms dimeric complexes. The cofactor is Binds multiple chlorophylls and provides some of the ligands for the Ca-4Mn-5O cluster of the oxygen-evolving complex. It may also provide a ligand for a Cl- that is required for oxygen evolution. PSII binds additional chlorophylls, carotenoids and specific lipids..

It is found in the plastid. Its subcellular location is the chloroplast thylakoid membrane. Its function is as follows. One of the components of the core complex of photosystem II (PSII). It binds chlorophyll and helps catalyze the primary light-induced photochemical processes of PSII. PSII is a light-driven water:plastoquinone oxidoreductase, using light energy to abstract electrons from H(2)O, generating O(2) and a proton gradient subsequently used for ATP formation. This chain is Photosystem II CP43 reaction center protein, found in Piper cenocladum (Ant piper).